Reading from the N-terminus, the 331-residue chain is Phenylalanine--tRNA ligase alpha subunit (331 aa).

Glu254 is a Mg(2+) binding site.

Belongs to the class-II aminoacyl-tRNA synthetase family. Phe-tRNA synthetase alpha subunit type 1 subfamily. As to quaternary structure, tetramer of two alpha and two beta subunits. Requires Mg(2+) as cofactor.

Its subcellular location is the cytoplasm. The catalysed reaction is tRNA(Phe) + L-phenylalanine + ATP = L-phenylalanyl-tRNA(Phe) + AMP + diphosphate + H(+). The polypeptide is Phenylalanine--tRNA ligase alpha subunit (Blochmanniella pennsylvanica (strain BPEN)).